The primary structure comprises 2068 residues: Lipoxygenase homology domain-containing protein 1 (2068 aa).

15 PLAT domains span residues lysine 43–leucine 160, asparagine 172–leucine 287, isoleucine 296–tyrosine 412, tyrosine 425–threonine 540, alanine 553–leucine 673, phenylalanine 684–tyrosine 803, valine 814–leucine 934, threonine 970–phenylalanine 1088, valine 1101–valine 1226, valine 1255–tyrosine 1373, isoleucine 1422–aspartate 1540, valine 1553–cysteine 1668, threonine 1680–alanine 1798, threonine 1811–valine 1932, and valine 1949–phenylalanine 2065.

In terms of tissue distribution, expressed in the inner ear, specifically in hair cells. Higher expression is detected in the cochlea.

The protein localises to the cell projection. It is found in the stereocilium. In terms of biological role, required for normal function of hair cells in the inner ear. This chain is Lipoxygenase homology domain-containing protein 1 (Loxhd1), found in Mus musculus (Mouse).